The following is a 100-amino-acid chain: Small ribosomal subunit protein uS14c (100 aa).

Belongs to the universal ribosomal protein uS14 family. As to quaternary structure, component of the chloroplast small ribosomal subunit (SSU). Mature 70S chloroplast ribosomes of higher plants consist of a small (30S) and a large (50S) subunit. The 30S small subunit contains 1 molecule of ribosomal RNA (16S rRNA) and 24 different proteins. The 50S large subunit contains 3 rRNA molecules (23S, 5S and 4.5S rRNA) and 33 different proteins.

The protein localises to the plastid. It localises to the chloroplast. In terms of biological role, component of the chloroplast ribosome (chloro-ribosome), a dedicated translation machinery responsible for the synthesis of chloroplast genome-encoded proteins, including proteins of the transcription and translation machinery and components of the photosynthetic apparatus. In Spinacia oleracea (Spinach), this protein is Small ribosomal subunit protein uS14c.